Consider the following 156-residue polypeptide: ATP synthase subunit b (156 aa).

A helical membrane pass occupies residues 12-32 (VAFFIFVLFCMKFVWPPVIAA).

This sequence belongs to the ATPase B chain family. F-type ATPases have 2 components, F(1) - the catalytic core - and F(0) - the membrane proton channel. F(1) has five subunits: alpha(3), beta(3), gamma(1), delta(1), epsilon(1). F(0) has three main subunits: a(1), b(2) and c(10-14). The alpha and beta chains form an alternating ring which encloses part of the gamma chain. F(1) is attached to F(0) by a central stalk formed by the gamma and epsilon chains, while a peripheral stalk is formed by the delta and b chains.

It localises to the cell inner membrane. In terms of biological role, f(1)F(0) ATP synthase produces ATP from ADP in the presence of a proton or sodium gradient. F-type ATPases consist of two structural domains, F(1) containing the extramembraneous catalytic core and F(0) containing the membrane proton channel, linked together by a central stalk and a peripheral stalk. During catalysis, ATP synthesis in the catalytic domain of F(1) is coupled via a rotary mechanism of the central stalk subunits to proton translocation. Functionally, component of the F(0) channel, it forms part of the peripheral stalk, linking F(1) to F(0). In Pseudomonas aeruginosa (strain UCBPP-PA14), this protein is ATP synthase subunit b.